The primary structure comprises 445 residues: Ribosomal protein uS12 methylthiotransferase RimO (445 aa).

The region spanning 10 to 120 is the MTTase N-terminal domain; sequence PKVGFVSLGC…VVNAVHEVVP (111 aa). Positions 19, 55, 84, 153, 157, and 160 each coordinate [4Fe-4S] cluster. The 240-residue stretch at 139 to 378 folds into the Radical SAM core domain; sequence LTPRHYAYLK…AHQQEISSAR (240 aa). Residues 380–445 form the TRAM domain; it reads QQRIGKEIEV…DEYDLWAETL (66 aa).

It belongs to the methylthiotransferase family. RimO subfamily. [4Fe-4S] cluster is required as a cofactor.

The protein localises to the cytoplasm. The enzyme catalyses L-aspartate(89)-[ribosomal protein uS12]-hydrogen + (sulfur carrier)-SH + AH2 + 2 S-adenosyl-L-methionine = 3-methylsulfanyl-L-aspartate(89)-[ribosomal protein uS12]-hydrogen + (sulfur carrier)-H + 5'-deoxyadenosine + L-methionine + A + S-adenosyl-L-homocysteine + 2 H(+). In terms of biological role, catalyzes the methylthiolation of an aspartic acid residue of ribosomal protein uS12. In Pseudomonas fluorescens (strain ATCC BAA-477 / NRRL B-23932 / Pf-5), this protein is Ribosomal protein uS12 methylthiotransferase RimO.